The sequence spans 71 residues: Frenatin 2.3S (71 aa).

Residues 1–22 form the signal peptide; that stretch reads MAFLKKSLFLVLFLGLVSLSMG. The segment at 21–56 is disordered; the sequence is MGEREKREEEEEEEEENKEEEANEEGKGESEEKRGL. Positions 23-54 are excised as a propeptide; the sequence is EREKREEEEEEEEENKEEEANEEGKGESEEKR. The segment covering 28–43 has biased composition (acidic residues); the sequence is EEEEEEEEENKEEEAN. Over residues 44 to 55 the composition is skewed to basic and acidic residues; sequence EEGKGESEEKRG. Gly-70 is modified (glycine amide; in Frenatin 2.1S).

The protein belongs to the frog skin active peptide (FSAP) family. Frenatin subfamily. Frenatin 2.3S is not amidated. As to expression, expressed by the skin glands.

The protein localises to the secreted. Antimicrobial peptide with potent activity against Gram-negative bacteria. Shows immunostimulatory actions both in vitro and in vivo. In vitro, is cytotoxic to non-small cell lung adenocarcinoma A549 cells. Also, stimulates production of pro-inflammatory cytokines by mouse peritoneal macrophages and down-regulates production of the anti-inflammatory cytokine IL-10 by lipopolysaccharide (LPS)-stimulated cells. In vivo, intraperitoneal injection in mice enhances the activation state and homing capacity of Th1 type lymphocytes and promotes the recruitment, activation and tumoricidal capacities of peritoneal NK cells. Has a very weak activity in stimulation of insulin release and a weak hemolytic activity. Its function is as follows. Antimicrobial peptide with potent activity against some Gram-positive and Gram-negative bacteria. Has a multifunctional mode of action. It displays depolarization and bacterial cell leakage, and can also internalize into bacterial cells and alter specific gene expression involved in bacterial resistance mechanisms. Does not agglutinate bacteria and lipid vesicles, even a high concentrations. Also displays moderate cellular protection against yellow fever virus (YFV)-infected Vero cells without causing significant cytotoxicity. Shows a weak hemolytic activity, and is not cytotoxic to monocytes. Frenatin 2.3S (version without Gly-71) shows no or very weak antibacterial activity, shows no or very weak cytotoxicity to lung adenocarcinoma A549 cells and shows very weak hemolysis. It only stimulates production of pro-inflammatory cytokines IL-23 (but not IL-1beta and TNF-alpha) by mouse peritoneal macrophages and has no effect on the production of the anti-inflammatory cytokine IL-10. Frenatin 2.3S (version without Gly-71) very weakly stimulates insulin release. The sequence is that of Frenatin 2.3S from Sphaenorhynchus lacteus (Orinoco lime treefrog).